A 313-amino-acid chain; its full sequence is Porphobilinogen deaminase (313 aa).

Cysteine 241 carries the S-(dipyrrolylmethanemethyl)cysteine modification.

The protein belongs to the HMBS family. As to quaternary structure, monomer. The cofactor is dipyrromethane.

It catalyses the reaction 4 porphobilinogen + H2O = hydroxymethylbilane + 4 NH4(+). Its pathway is porphyrin-containing compound metabolism; protoporphyrin-IX biosynthesis; coproporphyrinogen-III from 5-aminolevulinate: step 2/4. The protein operates within porphyrin-containing compound metabolism; chlorophyll biosynthesis. In terms of biological role, tetrapolymerization of the monopyrrole PBG into the hydroxymethylbilane pre-uroporphyrinogen in several discrete steps. This Chlorobium phaeobacteroides (strain BS1) protein is Porphobilinogen deaminase.